The chain runs to 348 residues: Phosphoribosylformylglycinamidine cyclo-ligase (348 aa).

Belongs to the AIR synthase family.

The protein localises to the cytoplasm. It carries out the reaction 2-formamido-N(1)-(5-O-phospho-beta-D-ribosyl)acetamidine + ATP = 5-amino-1-(5-phospho-beta-D-ribosyl)imidazole + ADP + phosphate + H(+). The protein operates within purine metabolism; IMP biosynthesis via de novo pathway; 5-amino-1-(5-phospho-D-ribosyl)imidazole from N(2)-formyl-N(1)-(5-phospho-D-ribosyl)glycinamide: step 2/2. The chain is Phosphoribosylformylglycinamidine cyclo-ligase from Cereibacter sphaeroides (strain ATCC 17023 / DSM 158 / JCM 6121 / CCUG 31486 / LMG 2827 / NBRC 12203 / NCIMB 8253 / ATH 2.4.1.) (Rhodobacter sphaeroides).